We begin with the raw amino-acid sequence, 144 residues long: Large ribosomal subunit protein uL16 (144 aa).

This sequence belongs to the universal ribosomal protein uL16 family. As to quaternary structure, part of the 50S ribosomal subunit.

Functionally, binds 23S rRNA and is also seen to make contacts with the A and possibly P site tRNAs. The chain is Large ribosomal subunit protein uL16 from Listeria innocua serovar 6a (strain ATCC BAA-680 / CLIP 11262).